A 324-amino-acid polypeptide reads, in one-letter code: Methionyl-tRNA formyltransferase (324 aa).

114-117 (SLLP) contacts (6S)-5,6,7,8-tetrahydrofolate.

This sequence belongs to the Fmt family.

The enzyme catalyses L-methionyl-tRNA(fMet) + (6R)-10-formyltetrahydrofolate = N-formyl-L-methionyl-tRNA(fMet) + (6S)-5,6,7,8-tetrahydrofolate + H(+). Functionally, attaches a formyl group to the free amino group of methionyl-tRNA(fMet). The formyl group appears to play a dual role in the initiator identity of N-formylmethionyl-tRNA by promoting its recognition by IF2 and preventing the misappropriation of this tRNA by the elongation apparatus. This Parabacteroides distasonis (strain ATCC 8503 / DSM 20701 / CIP 104284 / JCM 5825 / NCTC 11152) protein is Methionyl-tRNA formyltransferase.